Consider the following 444-residue polypeptide: Deoxyguanosinetriphosphate triphosphohydrolase-like protein (444 aa).

Residues 59–250 (RLTHSLEVSQ…MELADDIAYA (192 aa)) form the HD domain.

Belongs to the dGTPase family. Type 2 subfamily.

The polypeptide is Deoxyguanosinetriphosphate triphosphohydrolase-like protein (Shewanella halifaxensis (strain HAW-EB4)).